An 830-amino-acid polypeptide reads, in one-letter code: BLOC-2 complex member HPS5 homolog (830 aa).

WD repeat units follow at residues Arg-25–Ile-64, Ser-67–Gly-106, and Gly-114–Ile-153. Positions Asp-578–Lys-604 form a coiled coil.

The protein belongs to the HPS5 family.

Functionally, has a role in the biogenesis of eye pigment granules. Eye pigment granules are specialized forms of late endosomes or lysosomes. Biogenesis of pigment granules in the eye requires molecular components required for protein delivery to lysosomes. This Anopheles gambiae (African malaria mosquito) protein is BLOC-2 complex member HPS5 homolog.